Reading from the N-terminus, the 599-residue chain is Sulfite reductase [NADPH] flavoprotein alpha-component (599 aa).

Positions 64–202 constitute a Flavodoxin-like domain; it reads ITIISASQTG…AASEWRARVV (139 aa). FMN is bound by residues 70–75, 117–120, and 153–162; these read SQTGNA, STQG, and LGDSSYEFFC. Residues 234–448 enclose the FAD-binding FR-type domain; the sequence is DAPLVASLSV…IEHNDNFRLP (215 aa). FAD contacts are provided by residues threonine 322, alanine 356, 386-389, 404-406, tyrosine 410, and 419-422; these read RLYS, TVG, and GGAS. NADP(+)-binding positions include 519–520, 525–529, and aspartate 561; these read SR and KVYVQ. Residue tyrosine 599 participates in FAD binding.

Belongs to the NADPH-dependent sulphite reductase flavoprotein subunit CysJ family. The protein in the N-terminal section; belongs to the flavodoxin family. This sequence in the C-terminal section; belongs to the flavoprotein pyridine nucleotide cytochrome reductase family. As to quaternary structure, alpha(8)-beta(8). The alpha component is a flavoprotein, the beta component is a hemoprotein. It depends on FAD as a cofactor. FMN is required as a cofactor.

It catalyses the reaction hydrogen sulfide + 3 NADP(+) + 3 H2O = sulfite + 3 NADPH + 4 H(+). Its pathway is sulfur metabolism; hydrogen sulfide biosynthesis; hydrogen sulfide from sulfite (NADPH route): step 1/1. Its function is as follows. Component of the sulfite reductase complex that catalyzes the 6-electron reduction of sulfite to sulfide. This is one of several activities required for the biosynthesis of L-cysteine from sulfate. The flavoprotein component catalyzes the electron flow from NADPH -&gt; FAD -&gt; FMN to the hemoprotein component. The protein is Sulfite reductase [NADPH] flavoprotein alpha-component of Escherichia coli O157:H7.